A 457-amino-acid chain; its full sequence is Heme sensor protein HssS (457 aa).

Helical transmembrane passes span 9-29 and 164-184; these read IAIYSITVILFSALISFVLTN and TFLAVLLMLLLFISISLVIAS. Residues 186–238 form the HAMP domain; that stretch reads YSIIRPVKKLKLATERLIDGDFETPIKQTRKDEIGTLQYHFNKMRESLGQVDQ. In terms of domain architecture, Histidine kinase spans 246–456; it reads NVSHEIKTPL…TFTITLPNNS (211 aa). His249 is modified (phosphohistidine; by autocatalysis).

Autophosphorylated.

It localises to the cell membrane. It catalyses the reaction ATP + protein L-histidine = ADP + protein N-phospho-L-histidine.. Member of the two-component regulatory system HssS/HssR involved in intracellular heme homeostasis and tempering of staphylococcal virulence. HssS functions as a heme sensor histidine kinase which is autophosphorylated at a histidine residue and transfers its phosphate group to an aspartate residue of HssR. HssR/HssS activates the expression of hrtAB, an efflux pump, in response to extracellular heme, hemin, hemoglobin or blood. The polypeptide is Heme sensor protein HssS (hssS) (Staphylococcus aureus (strain USA300)).